The following is a 193-amino-acid chain: Acyl-homoserine-lactone synthase (193 aa).

The protein belongs to the autoinducer synthase family.

It catalyses the reaction a fatty acyl-[ACP] + S-adenosyl-L-methionine = an N-acyl-L-homoserine lactone + S-methyl-5'-thioadenosine + holo-[ACP] + H(+). Required for the synthesis of OHHL (N-(3-oxohexanoyl)-L-homoserine lactone) also known as VAI or N-(beta-ketocaproyl)homoserine lactone or 3-oxo-N-(tetrahydro-2-oxo-3-furanyl)-hexanamide, an autoinducer molecule which binds to LuxR and thus acts in bioluminescence regulation. This is Acyl-homoserine-lactone synthase (luxI) from Aliivibrio fischeri (strain ATCC 700601 / ES114) (Vibrio fischeri).